We begin with the raw amino-acid sequence, 48 residues long: Delta-stichotoxin-Hmg4a (48 aa).

3 disulfides stabilise this stretch: cysteine 3-cysteine 43, cysteine 5-cysteine 33, and cysteine 26-cysteine 44.

This sequence belongs to the sea anemone sodium channel inhibitory toxin family. Type II subfamily.

Its subcellular location is the secreted. It is found in the nematocyst. Its function is as follows. Binds specifically to voltage-gated sodium channels (Nav), thereby delaying their inactivation during signal transduction. Its toxicity is weaker than that of RpIII (AC P08380). This chain is Delta-stichotoxin-Hmg4a, found in Heteractis magnifica (Magnificent sea anemone).